Reading from the N-terminus, the 679-residue chain is DNA-directed RNA polymerase subunit beta' (679 aa).

Positions 69, 71, 87, and 90 each coordinate Zn(2+). Aspartate 489, aspartate 491, and aspartate 493 together coordinate Mg(2+).

This sequence belongs to the RNA polymerase beta' chain family. RpoC1 subfamily. In terms of assembly, in plastids the minimal PEP RNA polymerase catalytic core is composed of four subunits: alpha, beta, beta', and beta''. When a (nuclear-encoded) sigma factor is associated with the core the holoenzyme is formed, which can initiate transcription. Mg(2+) serves as cofactor. The cofactor is Zn(2+).

It is found in the plastid. It localises to the chloroplast. The catalysed reaction is RNA(n) + a ribonucleoside 5'-triphosphate = RNA(n+1) + diphosphate. DNA-dependent RNA polymerase catalyzes the transcription of DNA into RNA using the four ribonucleoside triphosphates as substrates. This is DNA-directed RNA polymerase subunit beta' from Oenothera argillicola (Appalachian evening primrose).